A 561-amino-acid chain; its full sequence is Probable xyloglucan galactosyltransferase GT20 (561 aa).

Over 1-31 (MVSKRKSRTSKTIEDSCIHLCSVFFRFLYYT) the chain is Cytoplasmic. Residues 32–52 (LPALFLFFFLLYLCLSFTTGI) form a helical; Signal-anchor for type II membrane protein membrane-spanning segment. Over 53-561 (SYNNFHMCIF…LLKKINRSVV (509 aa)) the chain is Lumenal. 6 N-linked (GlcNAc...) asparagine glycosylation sites follow: Asn-87, Asn-253, Asn-277, Asn-418, Asn-421, and Asn-557.

This sequence belongs to the glycosyltransferase 47 family. Expressed in hydathodes.

The protein localises to the golgi apparatus membrane. Functions in xyloglucan synthesis by adding side chains to the xylosylated glucan backbone. Involved in the galactosylation of hemicellulose xyloglucan. This is Probable xyloglucan galactosyltransferase GT20 from Arabidopsis thaliana (Mouse-ear cress).